We begin with the raw amino-acid sequence, 548 residues long: Esterase-5A (548 aa).

Positions 1–21 (MHLVRWLICLIQLWVQLGAAG) are cleaved as a signal peptide. Residues C87 and C106 are joined by a disulfide bond. N95 and N116 each carry an N-linked (GlcNAc...) asparagine glycan. S210 serves as the catalytic Acyl-ester intermediate. An intrachain disulfide couples C262 to C274. N479 carries an N-linked (GlcNAc...) asparagine glycan. An intrachain disulfide couples C518 to C539.

Belongs to the type-B carboxylesterase/lipase family.

The protein resides in the secreted. It catalyses the reaction a carboxylic ester + H2O = an alcohol + a carboxylate + H(+). The sequence is that of Esterase-5A (Est-5A) from Drosophila pseudoobscura pseudoobscura (Fruit fly).